Here is a 637-residue protein sequence, read N- to C-terminus: tRNA 5-methylaminomethyl-2-thiouridine biosynthesis bifunctional protein MnmC (637 aa).

The interval 1–20 (MSERIEWLEDGTAGGSPYSP) is disordered. Residues 1-232 (MSERIEWLED…KRDNLQGEYQ (232 aa)) are tRNA (mnm(5)s(2)U34)-methyltransferase. The interval 255–637 (IGAGLAGSAV…YATRLQPSGS (383 aa)) is FAD-dependent cmnm(5)s(2)U34 oxidoreductase.

In the N-terminal section; belongs to the methyltransferase superfamily. tRNA (mnm(5)s(2)U34)-methyltransferase family. It in the C-terminal section; belongs to the DAO family. It depends on FAD as a cofactor.

The protein localises to the cytoplasm. The enzyme catalyses 5-aminomethyl-2-thiouridine(34) in tRNA + S-adenosyl-L-methionine = 5-methylaminomethyl-2-thiouridine(34) in tRNA + S-adenosyl-L-homocysteine + H(+). Its function is as follows. Catalyzes the last two steps in the biosynthesis of 5-methylaminomethyl-2-thiouridine (mnm(5)s(2)U) at the wobble position (U34) in tRNA. Catalyzes the FAD-dependent demodification of cmnm(5)s(2)U34 to nm(5)s(2)U34, followed by the transfer of a methyl group from S-adenosyl-L-methionine to nm(5)s(2)U34, to form mnm(5)s(2)U34. The sequence is that of tRNA 5-methylaminomethyl-2-thiouridine biosynthesis bifunctional protein MnmC from Polaromonas naphthalenivorans (strain CJ2).